The primary structure comprises 362 residues: Type II methyltransferase M.MamI (362 aa).

Belongs to the N(4)/N(6)-methyltransferase family.

It catalyses the reaction a 2'-deoxyadenosine in DNA + S-adenosyl-L-methionine = an N(6)-methyl-2'-deoxyadenosine in DNA + S-adenosyl-L-homocysteine + H(+). A gamma subtype methylase that recognizes the double-stranded sequence 5'-GATNNNNATC-3', methylates A-? on both strands, and protects the DNA from cleavage by the MamI endonuclease. The protein is Type II methyltransferase M.MamI of Microbacterium ammoniaphilum.